We begin with the raw amino-acid sequence, 921 residues long: Isoleucine--tRNA ligase 1 (921 aa).

The 'HIGH' region motif lies at 57–67 (PYANGDIHMGH). L-isoleucyl-5'-AMP is bound at residue E552. Positions 593–597 (KMSKS) match the 'KMSKS' region motif. ATP is bound at residue K596. Zn(2+) contacts are provided by C888, C891, C908, and C911.

This sequence belongs to the class-I aminoacyl-tRNA synthetase family. IleS type 1 subfamily. In terms of assembly, monomer. Zn(2+) serves as cofactor.

The protein resides in the cytoplasm. The enzyme catalyses tRNA(Ile) + L-isoleucine + ATP = L-isoleucyl-tRNA(Ile) + AMP + diphosphate. Functionally, catalyzes the attachment of isoleucine to tRNA(Ile). As IleRS can inadvertently accommodate and process structurally similar amino acids such as valine, to avoid such errors it has two additional distinct tRNA(Ile)-dependent editing activities. One activity is designated as 'pretransfer' editing and involves the hydrolysis of activated Val-AMP. The other activity is designated 'posttransfer' editing and involves deacylation of mischarged Val-tRNA(Ile). The polypeptide is Isoleucine--tRNA ligase 1 (Bacillus cereus (strain ZK / E33L)).